Reading from the N-terminus, the 369-residue chain is 3-isopropylmalate dehydrogenase (369 aa).

76 to 89 (GPKWDRNPSHLRPE) is an NAD(+) binding site. Substrate-binding residues include arginine 96, arginine 106, arginine 134, and aspartate 223. 3 residues coordinate Mg(2+): aspartate 223, aspartate 247, and aspartate 251. 281–293 (GSAPDIAGQNKAN) serves as a coordination point for NAD(+).

Belongs to the isocitrate and isopropylmalate dehydrogenases family. LeuB type 1 subfamily. Homodimer. Requires Mg(2+) as cofactor. Mn(2+) is required as a cofactor.

It is found in the cytoplasm. The enzyme catalyses (2R,3S)-3-isopropylmalate + NAD(+) = 4-methyl-2-oxopentanoate + CO2 + NADH. The protein operates within amino-acid biosynthesis; L-leucine biosynthesis; L-leucine from 3-methyl-2-oxobutanoate: step 3/4. Catalyzes the oxidation of 3-carboxy-2-hydroxy-4-methylpentanoate (3-isopropylmalate) to 3-carboxy-4-methyl-2-oxopentanoate. The product decarboxylates to 4-methyl-2 oxopentanoate. This chain is 3-isopropylmalate dehydrogenase (leuB), found in Priestia megaterium (strain DSM 319 / IMG 1521) (Bacillus megaterium).